The chain runs to 435 residues: Cytochrome c biogenesis protein CcsB (435 aa).

Transmembrane regions (helical) follow at residues 14-34 (LRLA…GTIL), 72-92 (SVWF…CSWR), and 162-182 (VGPL…AWGA).

It belongs to the Ccs1/CcsB family. May interact with CcsA.

It is found in the cellular thylakoid membrane. In terms of biological role, required during biogenesis of c-type cytochromes (cytochrome c6 and cytochrome f) at the step of heme attachment. This is Cytochrome c biogenesis protein CcsB from Synechococcus sp. (strain CC9311).